Consider the following 51-residue polypeptide: Basic phospholipase A2 homolog BmatTX-I (51 aa).

Residues Cys28 and Cys44 are joined by a disulfide bond.

As to quaternary structure, monomer. As to expression, expressed by the venom gland.

The protein resides in the secreted. Its function is as follows. Snake venom phospholipase A2 homolog that lacks enzymatic activity. Shows high myotoxic activity, neutrophile activation (demonstrated by activation induction of IL-1beta production), slight cytotoxicity against Jurkat (leukemia T) and SK-BR-3 (breast adenocarcinoma) tumor cell lines, and slight antiparasitic activity against promastigote forms of Leishmania amazonensis. A model of myotoxic mechanism has been proposed: an apo Lys49-PLA2 is activated by the entrance of a hydrophobic molecule (e.g. fatty acid) at the hydrophobic channel of the protein leading to a reorientation of a monomer. This reorientation causes a transition between 'inactive' to 'active' states, causing alignment of C-terminal and membrane-docking sites (MDoS) side-by-side and putting the membrane-disruption sites (MDiS) in the same plane, exposed to solvent and in a symmetric position for both monomers. The MDoS region stabilizes the toxin on membrane by the interaction of charged residues with phospholipid head groups. Subsequently, the MDiS region destabilizes the membrane with penetration of hydrophobic residues. This insertion causes a disorganization of the membrane, allowing an uncontrolled influx of ions (i.e. calcium and sodium), and eventually triggering irreversible intracellular alterations and cell death. This is Basic phospholipase A2 homolog BmatTX-I from Bothrops mattogrossensis (Pitviper).